A 158-amino-acid chain; its full sequence is C-type lectin BML-1 (158 aa).

The first 23 residues, 1-23 (MGHFTFTGLCLLAMFLSLRGAEC), serve as a signal peptide directing secretion. Disulfide bonds link Cys26/Cys37, Cys54/Cys154, Cys61/Cys156, and Cys129/Cys146. The C-type lectin domain occupies 33–155 (KNGLCYKVFS…CAALRPFLCQ (123 aa)). Positions 119, 121, and 127 each coordinate Ca(2+). A Galactose-binding motif is present at residues 119-121 (QPD). N-linked (GlcNAc...) asparagine glycosylation is present at Asn134. Ca(2+) is bound by residues Asn142 and Asp143.

The protein belongs to the true venom lectin family. In terms of assembly, homodimer; non-covalently linked. As to expression, expressed by the venom gland.

Its subcellular location is the secreted. In terms of biological role, recombinant C-type lectin BML-1 is able to agglutinate erythrocytes. May be a calcium-dependent lectin. The chain is C-type lectin BML-1 from Bungarus multicinctus (Many-banded krait).